Consider the following 257-residue polypeptide: tRNA pseudouridine synthase A (257 aa).

Asp-52 acts as the Nucleophile in catalysis. Tyr-111 is a binding site for substrate.

This sequence belongs to the tRNA pseudouridine synthase TruA family. As to quaternary structure, homodimer.

It carries out the reaction uridine(38/39/40) in tRNA = pseudouridine(38/39/40) in tRNA. Formation of pseudouridine at positions 38, 39 and 40 in the anticodon stem and loop of transfer RNAs. This Dinoroseobacter shibae (strain DSM 16493 / NCIMB 14021 / DFL 12) protein is tRNA pseudouridine synthase A.